The primary structure comprises 167 residues: NAD(P)H-quinone oxidoreductase subunit I, chloroplastic (167 aa).

2 4Fe-4S ferredoxin-type domains span residues 55–84 (GRIHFEFDKCIACEVCVRVCPIDLPVVDWK) and 95–124 (LNYSIDFGICIFCGNCVEYCPTNCLSMTEE). [4Fe-4S] cluster-binding residues include Cys-64, Cys-67, Cys-70, Cys-74, Cys-104, Cys-107, Cys-110, and Cys-114.

It belongs to the complex I 23 kDa subunit family. As to quaternary structure, NDH is composed of at least 16 different subunits, 5 of which are encoded in the nucleus. [4Fe-4S] cluster is required as a cofactor.

Its subcellular location is the plastid. It is found in the chloroplast thylakoid membrane. The enzyme catalyses a plastoquinone + NADH + (n+1) H(+)(in) = a plastoquinol + NAD(+) + n H(+)(out). The catalysed reaction is a plastoquinone + NADPH + (n+1) H(+)(in) = a plastoquinol + NADP(+) + n H(+)(out). Its function is as follows. NDH shuttles electrons from NAD(P)H:plastoquinone, via FMN and iron-sulfur (Fe-S) centers, to quinones in the photosynthetic chain and possibly in a chloroplast respiratory chain. The immediate electron acceptor for the enzyme in this species is believed to be plastoquinone. Couples the redox reaction to proton translocation, and thus conserves the redox energy in a proton gradient. The sequence is that of NAD(P)H-quinone oxidoreductase subunit I, chloroplastic from Citrus sinensis (Sweet orange).